The sequence spans 224 residues: MPQSPRPVPSWALLLRLLALLRPPGLGEACSCAPAHPQQHVCHSALAIRAKISSEKVVPASTDPADPQKMIRYEIKQIKMFKGFEKVNDIQYIYTPFDSSLCGVKLEANSQKRYLLTGQILSDGKVFVHLCNYIEPWENLSFLQRESLNHHYHLNCGCQITTCYAVPCTISAPNECLWTDWLLERKLYGYQAQHYVCMKHVDGSCSWYQGRLPLRKEFVDIIQP.

Residues 1 to 29 form the signal peptide; that stretch reads MPQSPRPVPSWALLLRLLALLRPPGLGEA. Cys-30 contributes to the Zn(2+) binding site. Involved in metalloproteinase-binding regions lie at residues 30–33 and 99–100; these read CSCA and SS. Cystine bridges form between Cys-30–Cys-102, Cys-32–Cys-131, Cys-42–Cys-156, Cys-158–Cys-205, Cys-163–Cys-168, and Cys-176–Cys-197. Residues 30-156 form the NTR domain; that stretch reads CSCAPAHPQQ…SLNHHYHLNC (127 aa).

The protein belongs to the protease inhibitor I35 (TIMP) family.

It is found in the secreted. Complexes with metalloproteinases (such as collagenases) and irreversibly inactivates them by binding to their catalytic zinc cofactor. This chain is Metalloproteinase inhibitor 4 (TIMP4), found in Bos taurus (Bovine).